A 638-amino-acid polypeptide reads, in one-letter code: 1-deoxy-D-xylulose-5-phosphate synthase (638 aa).

Residues histidine 75 and 116-118 contribute to the thiamine diphosphate site; that span reads AHS. Aspartate 147 serves as a coordination point for Mg(2+). Thiamine diphosphate is bound by residues 148 to 149, asparagine 177, tyrosine 288, and glutamate 370; that span reads GA. Asparagine 177 is a binding site for Mg(2+).

The protein belongs to the transketolase family. DXPS subfamily. As to quaternary structure, homodimer. Requires Mg(2+) as cofactor. It depends on thiamine diphosphate as a cofactor.

The enzyme catalyses D-glyceraldehyde 3-phosphate + pyruvate + H(+) = 1-deoxy-D-xylulose 5-phosphate + CO2. Its pathway is metabolic intermediate biosynthesis; 1-deoxy-D-xylulose 5-phosphate biosynthesis; 1-deoxy-D-xylulose 5-phosphate from D-glyceraldehyde 3-phosphate and pyruvate: step 1/1. Catalyzes the acyloin condensation reaction between C atoms 2 and 3 of pyruvate and glyceraldehyde 3-phosphate to yield 1-deoxy-D-xylulose-5-phosphate (DXP). This chain is 1-deoxy-D-xylulose-5-phosphate synthase, found in Cupriavidus necator (strain ATCC 17699 / DSM 428 / KCTC 22496 / NCIMB 10442 / H16 / Stanier 337) (Ralstonia eutropha).